Reading from the N-terminus, the 208-residue chain is Methenyltetrahydrofolate cyclohydrolase (208 aa).

Residues 25-46 (GAAAISGAMGAALVSMVCNLTI) form a helical membrane-spanning segment.

The protein belongs to the cyclodeaminase/cyclohydrolase family. Homodimer.

It localises to the membrane. The enzyme catalyses (6R)-5,10-methenyltetrahydrofolate + H2O = (6R)-10-formyltetrahydrofolate + H(+). Its pathway is one-carbon metabolism; formaldehyde assimilation via serine pathway. Functionally, required for both C1 and C2 metabolism. The chain is Methenyltetrahydrofolate cyclohydrolase (fchA) from Methylorubrum extorquens (strain ATCC 14718 / DSM 1338 / JCM 2805 / NCIMB 9133 / AM1) (Methylobacterium extorquens).